A 149-amino-acid chain; its full sequence is Low molecular weight protein-tyrosine-phosphatase Wzb (149 aa).

The active-site Nucleophile is the Cys-9. Arg-15 is a catalytic residue. Asp-115 functions as the Proton donor in the catalytic mechanism.

This sequence belongs to the low molecular weight phosphotyrosine protein phosphatase family.

The enzyme catalyses O-phospho-L-tyrosyl-[protein] + H2O = L-tyrosyl-[protein] + phosphate. It participates in glycan metabolism; exopolysaccharide biosynthesis. Functionally, dephosphorylates Wzc. Required for the extracellular polysaccharide colanic acid synthesis. Probably involved in the export of colanic acid from the cell to medium. Involved in protection of cells against contact-dependent growth inhibition (CDI). The protein is Low molecular weight protein-tyrosine-phosphatase Wzb (wzb) of Salmonella typhi.